Here is a 383-residue protein sequence, read N- to C-terminus: ATP phosphoribosyltransferase regulatory subunit (383 aa).

Belongs to the class-II aminoacyl-tRNA synthetase family. HisZ subfamily. Heteromultimer composed of HisG and HisZ subunits.

The protein resides in the cytoplasm. The protein operates within amino-acid biosynthesis; L-histidine biosynthesis; L-histidine from 5-phospho-alpha-D-ribose 1-diphosphate: step 1/9. Functionally, required for the first step of histidine biosynthesis. May allow the feedback regulation of ATP phosphoribosyltransferase activity by histidine. The chain is ATP phosphoribosyltransferase regulatory subunit from Desulfitobacterium hafniense (strain DSM 10664 / DCB-2).